The following is a 118-amino-acid chain: DNA-directed RNA polymerase subunit omega (118 aa).

Positions 78–104 (DEPEEDSMAMLMGGGQPDKPAEDDMSE) are disordered.

The protein belongs to the RNA polymerase subunit omega family. As to quaternary structure, the RNAP catalytic core consists of 2 alpha, 1 beta, 1 beta' and 1 omega subunit. When a sigma factor is associated with the core the holoenzyme is formed, which can initiate transcription.

It carries out the reaction RNA(n) + a ribonucleoside 5'-triphosphate = RNA(n+1) + diphosphate. Its function is as follows. Promotes RNA polymerase assembly. Latches the N- and C-terminal regions of the beta' subunit thereby facilitating its interaction with the beta and alpha subunits. In Dinoroseobacter shibae (strain DSM 16493 / NCIMB 14021 / DFL 12), this protein is DNA-directed RNA polymerase subunit omega.